The primary structure comprises 138 residues: MMAMFEEVEVEAYVYPTEDINKVKKAMLNLVPGLKFEAFDKGEYMILVGKTRDKRALQRLYELFRGQQILDTARMMLEEGYFGEEIIIKVHKQVAYAGKVNFNEESPLGPITITIRTKEPQKLMKWLAPRTKDGVPIE.

The protein belongs to the UPF0201 family.

This chain is UPF0201 protein PYRAB09730, found in Pyrococcus abyssi (strain GE5 / Orsay).